The following is a 1327-amino-acid chain: ABC transporter 1 (1327 aa).

A run of 6 helical transmembrane segments spans residues 47 to 67, 100 to 120, 170 to 190, 195 to 215, 228 to 248, and 276 to 296; these read LGILAAIASGVPFPLMGIIFG, VYVGIAYFVLVYIYIASWNLF, KVGIVLNSVSFFITAYIIAFV, LGGELVSLTPAYLLMSLVGGY, VAGASSVAMEALSNATIVHAF, and VAVQSGLLYFIAFSANGLAFW. The ABC transmembrane type-1 1 domain occupies 47–326; that stretch reads LGILAAIASG…TTYTVIFLLV (280 aa). 3 N-linked (GlcNAc...) asparagine glycosylation sites follow: Asn-381, Asn-390, and Asn-406. Residues 386–663 enclose the ABC transporter 1 domain; that stretch reads IELNNVSFAF…DGAYAGLVRL (278 aa). ATP is bound at residue 421 to 428; it reads GLSGSGKS. 2 N-linked (GlcNAc...) asparagine glycosylation sites follow: Asn-463 and Asn-674. 6 consecutive transmembrane segments (helical) span residues 743–763, 785–805, 859–881, 888–910, 971–991, and 1005–1025; these read FLALTSAFVVGGTYSASAVVF, FYGLMFFILAIIEFFANLGSW, LTGSVVGTIIAILVNLVVAIALS, IALVCLAVVPLMLGAGVMRVITM, LWLAISYGVSNFLYALAYWWG, and FFIVLMALLVSAQLWGQMFTL. In terms of domain architecture, ABC transmembrane type-1 2 spans 743–1031; it reads FLALTSAFVV…MFTLAPDVSR (289 aa). Asn-1050 carries N-linked (GlcNAc...) asparagine glycosylation. The segment at 1054–1081 is disordered; it reads PCQHLKPGNDLEANAEPREKRPDQSQGG. Positions 1084-1323 constitute an ABC transporter 2 domain; it reads VSLNNVKFSY…SESYKINALH (240 aa). 1119–1126 is an ATP binding site; the sequence is GPSGAGKS.

The protein belongs to the ABC transporter superfamily. ABCB family. Multidrug resistance exporter (TC 3.A.1.201) subfamily.

Its subcellular location is the membrane. ABC transporter; part of the gene cluster that mediates the biosynthesis of hydroxamate-containing siderophores that play a critical role in virulence via intracellular iron acquisition during macrophage infection. Probably involved in the excretion of the extracellular siderophores. This chain is ABC transporter 1, found in Ajellomyces capsulatus (Darling's disease fungus).